We begin with the raw amino-acid sequence, 299 residues long: Protoheme IX farnesyltransferase (299 aa).

The next 8 helical transmembrane spans lie at 24 to 44, 46 to 66, 94 to 114, 118 to 138, 146 to 166, 172 to 192, 232 to 252, and 278 to 298; these read VVAL…DQGM, WNAL…AAAI, VHAL…LAWG, LTAW…TLFL, IVLG…SVTG, ALLL…ALAV, LPFI…ALGV, and ITYL…PVTL.

It belongs to the UbiA prenyltransferase family. Protoheme IX farnesyltransferase subfamily.

The protein resides in the cell inner membrane. It carries out the reaction heme b + (2E,6E)-farnesyl diphosphate + H2O = Fe(II)-heme o + diphosphate. The protein operates within porphyrin-containing compound metabolism; heme O biosynthesis; heme O from protoheme: step 1/1. Functionally, converts heme B (protoheme IX) to heme O by substitution of the vinyl group on carbon 2 of heme B porphyrin ring with a hydroxyethyl farnesyl side group. The chain is Protoheme IX farnesyltransferase from Hahella chejuensis (strain KCTC 2396).